We begin with the raw amino-acid sequence, 524 residues long: Solute carrier family 35 member F5 (524 aa).

The disordered stretch occupies residues 1–22; it reads MVPPRHHPGAGRPGALSSSPPF. Low complexity predominate over residues 13 to 22; that stretch reads PGALSSSPPF. Helical transmembrane passes span 69 to 89 and 101 to 121; these read MALGIVILLLVDVIWVASSEL and FFSTFAKTSMFVLYLLGFIVW. Serine 207 carries the post-translational modification Phosphoserine. The next 8 membrane-spanning stretches (helical) occupy residues 244–264, 269–289, 297–317, 328–348, 362–382, 396–416, 421–441, and 453–473; these read ISFFFCFVWFLANFSYQEALS, AIVNILSSTSGLFTLILAAMF, FTLSKLLAVILSIGGVVLVNL, TIGSIWSLVGAMLYAVYIVMI, MFFGFVGLFNLLLLWPGFFLL, VVLMCIVINGLIGTVLSEFLW, FLTSSLIGTLALSLTIPLSII, and WLFFAGAIPVFFSFFIATLLC. The region spanning 253 to 317 is the EamA domain; that stretch reads FLANFSYQEA…SIGGVVLVNL (65 aa).

Belongs to the SLC35F solute transporter family.

Its subcellular location is the membrane. Putative solute transporter. The chain is Solute carrier family 35 member F5 (SLC35F5) from Bos taurus (Bovine).